Here is a 549-residue protein sequence, read N- to C-terminus: Hydroxylamine reductase (549 aa).

[4Fe-4S] cluster-binding residues include C3, C6, C15, and C21. Hybrid [4Fe-2O-2S] cluster contacts are provided by H244, E268, C313, C405, C433, C458, E492, and K494. Residue C405 is modified to Cysteine persulfide.

It belongs to the HCP family. It depends on [4Fe-4S] cluster as a cofactor. The cofactor is hybrid [4Fe-2O-2S] cluster.

It is found in the cytoplasm. The catalysed reaction is A + NH4(+) + H2O = hydroxylamine + AH2 + H(+). Its function is as follows. Catalyzes the reduction of hydroxylamine to form NH(3) and H(2)O. This chain is Hydroxylamine reductase, found in Crocosphaera subtropica (strain ATCC 51142 / BH68) (Cyanothece sp. (strain ATCC 51142)).